An 89-amino-acid polypeptide reads, in one-letter code: Small ribosomal subunit protein bS20 (89 aa).

It belongs to the bacterial ribosomal protein bS20 family.

Binds directly to 16S ribosomal RNA. This is Small ribosomal subunit protein bS20 from Sulfurovum sp. (strain NBC37-1).